The following is a 446-amino-acid chain: Phosphoglucosamine mutase (446 aa).

Ser-101 (phosphoserine intermediate) is an active-site residue. Residues Ser-101, Asp-240, Asp-242, and Asp-244 each contribute to the Mg(2+) site. Ser-101 is modified (phosphoserine).

Belongs to the phosphohexose mutase family. Requires Mg(2+) as cofactor. In terms of processing, activated by phosphorylation.

It catalyses the reaction alpha-D-glucosamine 1-phosphate = D-glucosamine 6-phosphate. Catalyzes the conversion of glucosamine-6-phosphate to glucosamine-1-phosphate. The polypeptide is Phosphoglucosamine mutase (Coxiella burnetii (strain CbuK_Q154) (Coxiella burnetii (strain Q154))).